Here is a 91-residue protein sequence, read N- to C-terminus: UPF0250 protein Lcho_4239 (91 aa).

Belongs to the UPF0250 family.

This chain is UPF0250 protein Lcho_4239, found in Leptothrix cholodnii (strain ATCC 51168 / LMG 8142 / SP-6) (Leptothrix discophora (strain SP-6)).